We begin with the raw amino-acid sequence, 212 residues long: Thiamine-phosphate synthase (212 aa).

38–42 lines the 4-amino-2-methyl-5-(diphosphooxymethyl)pyrimidine pocket; the sequence is QLREK. 2 residues coordinate Mg(2+): Asp71 and Asp90. Lys138 serves as a coordination point for 4-amino-2-methyl-5-(diphosphooxymethyl)pyrimidine. Gly166 provides a ligand contact to 2-[(2R,5Z)-2-carboxy-4-methylthiazol-5(2H)-ylidene]ethyl phosphate.

The protein belongs to the thiamine-phosphate synthase family. Requires Mg(2+) as cofactor.

The catalysed reaction is 2-[(2R,5Z)-2-carboxy-4-methylthiazol-5(2H)-ylidene]ethyl phosphate + 4-amino-2-methyl-5-(diphosphooxymethyl)pyrimidine + 2 H(+) = thiamine phosphate + CO2 + diphosphate. The enzyme catalyses 2-(2-carboxy-4-methylthiazol-5-yl)ethyl phosphate + 4-amino-2-methyl-5-(diphosphooxymethyl)pyrimidine + 2 H(+) = thiamine phosphate + CO2 + diphosphate. It carries out the reaction 4-methyl-5-(2-phosphooxyethyl)-thiazole + 4-amino-2-methyl-5-(diphosphooxymethyl)pyrimidine + H(+) = thiamine phosphate + diphosphate. It functions in the pathway cofactor biosynthesis; thiamine diphosphate biosynthesis; thiamine phosphate from 4-amino-2-methyl-5-diphosphomethylpyrimidine and 4-methyl-5-(2-phosphoethyl)-thiazole: step 1/1. Condenses 4-methyl-5-(beta-hydroxyethyl)thiazole monophosphate (THZ-P) and 2-methyl-4-amino-5-hydroxymethyl pyrimidine pyrophosphate (HMP-PP) to form thiamine monophosphate (TMP). This Chlamydia caviae (strain ATCC VR-813 / DSM 19441 / 03DC25 / GPIC) (Chlamydophila caviae) protein is Thiamine-phosphate synthase.